The chain runs to 415 residues: Histidine--tRNA ligase (415 aa).

The protein belongs to the class-II aminoacyl-tRNA synthetase family. As to quaternary structure, homodimer.

The protein localises to the cytoplasm. The catalysed reaction is tRNA(His) + L-histidine + ATP = L-histidyl-tRNA(His) + AMP + diphosphate + H(+). The polypeptide is Histidine--tRNA ligase (Rickettsia bellii (strain RML369-C)).